Reading from the N-terminus, the 669-residue chain is MARGATWTRRLHLHGLFLAVLLLLTLPAGSTAAAGGGGGTVIGIDLGTTYSCVGVYRNGHVEIIANDQGNRITPSWVAFTGGGERLIGEAAKNQAAANPGRTVYDAKRLIGRRFADAEVQRDMRLLPFAVVDKGGKPHVRVEVRGGDVRLLSPEEVSAMVLARMKETAEAYLGEEVTRAVVTVPAYFNDAQRQATKDAATIAGLAVERILNEPTAAALAYGVGKEGAGGKNVLVFDLGGGTFDVSVLAIDGGVYEVLATNGDTHLGGEDFDQRVMEHFVELVRRKHGRDIAGDARALGKLRRECERAKRALSIQHQVRVEVESLFDGVDLSEPLSRARFEELNNDLFRKTMAPVRKAMADARLSNADIDEIVLVGGSTRIPKVRQLLRDYFGGKQPNQGVNPDEAVAYGAAIQANIVGGDTDNKTRDMVVLDVTPLTLGLETAGGVMATLIPRNTPVPTKRAQLFSTYKDKQTTVTVKVFEGERSMTRDNRLLGRFDLAGIAPAPRGAPQIEVAFEVDADGILSVSAADRATGRSERITISGDDRKTSREEIDRMLGEAEEFADEDRRHRERAGARNSLEAYVYGVKNAVVGGEMAGAMDGGEKEKVEAAVMEAYEWLDGNQDVGKEEYEEKLRELEDVCNPVMSAVYQRSGGSRRDGDGGGDDDHDEL.

Positions 1-32 are cleaved as a signal peptide; sequence MARGATWTRRLHLHGLFLAVLLLLTLPAGSTA. The N-linked (GlcNAc...) asparagine glycan is linked to Asn423. The disordered stretch occupies residues 646–669; that stretch reads AVYQRSGGSRRDGDGGGDDDHDEL. The span at 660–669 shows a compositional bias: acidic residues; sequence GGGDDDHDEL. A Prevents secretion from ER motif is present at residues 666 to 669; it reads HDEL.

It belongs to the heat shock protein 70 family.

The protein localises to the endoplasmic reticulum. In terms of biological role, functions as a chaperone during endoplasmic reticulum (ER) stress response. The protein is Heat shock 70 kDa protein BIP3 of Oryza sativa subsp. japonica (Rice).